A 549-amino-acid polypeptide reads, in one-letter code: Oxygen-dependent choline dehydrogenase (549 aa).

An FAD-binding site is contributed by 4–33; sequence DFVIIGSGSAGSAMAYRLSEDGRYSVIVIE. Residue H465 is the Proton acceptor of the active site.

It belongs to the GMC oxidoreductase family. Requires FAD as cofactor.

It carries out the reaction choline + A = betaine aldehyde + AH2. The enzyme catalyses betaine aldehyde + NAD(+) + H2O = glycine betaine + NADH + 2 H(+). The protein operates within amine and polyamine biosynthesis; betaine biosynthesis via choline pathway; betaine aldehyde from choline (cytochrome c reductase route): step 1/1. Involved in the biosynthesis of the osmoprotectant glycine betaine. Catalyzes the oxidation of choline to betaine aldehyde and betaine aldehyde to glycine betaine at the same rate. In Brucella melitensis biotype 1 (strain ATCC 23456 / CCUG 17765 / NCTC 10094 / 16M), this protein is Oxygen-dependent choline dehydrogenase.